Consider the following 410-residue polypeptide: Peptidase T (410 aa).

A Zn(2+)-binding site is contributed by histidine 79. Aspartate 81 is a catalytic residue. Aspartate 142 is a binding site for Zn(2+). Glutamate 176 (proton acceptor) is an active-site residue. 3 residues coordinate Zn(2+): glutamate 177, aspartate 199, and histidine 381.

Belongs to the peptidase M20B family. The cofactor is Zn(2+).

Its subcellular location is the cytoplasm. The enzyme catalyses Release of the N-terminal residue from a tripeptide.. Functionally, cleaves the N-terminal amino acid of tripeptides. The protein is Peptidase T of Listeria welshimeri serovar 6b (strain ATCC 35897 / DSM 20650 / CCUG 15529 / CIP 8149 / NCTC 11857 / SLCC 5334 / V8).